Reading from the N-terminus, the 383-residue chain is S-adenosylmethionine synthase (383 aa).

Residue histidine 15 coordinates ATP. Aspartate 17 lines the Mg(2+) pocket. Position 43 (glutamate 43) interacts with K(+). The L-methionine site is built by glutamate 56 and glutamine 99. Positions glutamine 99–arginine 109 are flexible loop. Residues aspartate 164 to lysine 166, arginine 230 to phenylalanine 231, aspartate 239, arginine 245 to lysine 246, alanine 262, and lysine 266 each bind ATP. Aspartate 239 contacts L-methionine. Lysine 270 contacts L-methionine.

Belongs to the AdoMet synthase family. In terms of assembly, homotetramer; dimer of dimers. Mg(2+) is required as a cofactor. It depends on K(+) as a cofactor.

The protein resides in the cytoplasm. The enzyme catalyses L-methionine + ATP + H2O = S-adenosyl-L-methionine + phosphate + diphosphate. It participates in amino-acid biosynthesis; S-adenosyl-L-methionine biosynthesis; S-adenosyl-L-methionine from L-methionine: step 1/1. Its function is as follows. Catalyzes the formation of S-adenosylmethionine (AdoMet) from methionine and ATP. The overall synthetic reaction is composed of two sequential steps, AdoMet formation and the subsequent tripolyphosphate hydrolysis which occurs prior to release of AdoMet from the enzyme. This is S-adenosylmethionine synthase from Pseudoalteromonas translucida (strain TAC 125).